The primary structure comprises 385 residues: 1-deoxy-D-xylulose 5-phosphate reductoisomerase (385 aa).

Residues Thr13, Gly14, Ser15, Ile16, Asn40, and Asn122 each contribute to the NADPH site. 1-deoxy-D-xylulose 5-phosphate is bound at residue Lys123. NADPH is bound at residue Glu124. Asp148 serves as a coordination point for Mn(2+). Residues Ser149, Glu150, Ser177, and His200 each coordinate 1-deoxy-D-xylulose 5-phosphate. Glu150 provides a ligand contact to Mn(2+). Position 206 (Gly206) interacts with NADPH. Ser213, Asn218, Lys219, and Glu222 together coordinate 1-deoxy-D-xylulose 5-phosphate. Glu222 is a Mn(2+) binding site.

The protein belongs to the DXR family. It depends on Mg(2+) as a cofactor. The cofactor is Mn(2+).

The catalysed reaction is 2-C-methyl-D-erythritol 4-phosphate + NADP(+) = 1-deoxy-D-xylulose 5-phosphate + NADPH + H(+). Its pathway is isoprenoid biosynthesis; isopentenyl diphosphate biosynthesis via DXP pathway; isopentenyl diphosphate from 1-deoxy-D-xylulose 5-phosphate: step 1/6. In terms of biological role, catalyzes the NADPH-dependent rearrangement and reduction of 1-deoxy-D-xylulose-5-phosphate (DXP) to 2-C-methyl-D-erythritol 4-phosphate (MEP). The sequence is that of 1-deoxy-D-xylulose 5-phosphate reductoisomerase from Francisella tularensis subsp. novicida (strain U112).